Reading from the N-terminus, the 457-residue chain is Cation efflux system protein CusC (457 aa).

A signal peptide spans 1-17 (MSPCKLLPFCVALALTG). Cys-18 carries N-palmitoyl cysteine lipidation. Cys-18 is lipidated: S-diacylglycerol cysteine.

The protein belongs to the outer membrane factor (OMF) (TC 1.B.17) family. Homotrimer. Component of the cus efflux system composed of CusA, CusB, CusC and CusF.

Its subcellular location is the cell outer membrane. In terms of biological role, forms pores that allow passive diffusion of cations across the outer membrane. Part of a cation efflux system that mediates resistance to copper and silver. In pathogenic strains it allows the bacteria to invade brain microvascular endothelial cells (BMEC) thus allowing it to cross the blood-brain barrier and cause neonatal meningitis. The protein is Cation efflux system protein CusC (cusC) of Escherichia coli (strain K12).